The following is a 145-amino-acid chain: MLSSKNVVVVEAWNTTTTTQTQTPHRPSLLHPTFYWGYNCQVLFSGWPGSDRGMYALALIFVFFLAFLAEWLARCSDASSIKQGADKLAKVAFRTAMYTVKSGFSYLVILAVVSFNGGVFLAAIFGHALGFAVFRGRAFRNRDIQ.

2 helical membrane passes run 53-73 (GMYALALIFVFFLAFLAEWLA) and 106-126 (YLVILAVVSFNGGVFLAAIFG).

It belongs to the copper transporter (Ctr) (TC 1.A.56) family. SLC31A subfamily. In terms of tissue distribution, highly expressed in roots and at lower levels in leaves, stems and flowers.

Its subcellular location is the membrane. Its function is as follows. Involved in the transport of copper. The protein is Copper transporter 4 (COPT4) of Arabidopsis thaliana (Mouse-ear cress).